A 565-amino-acid chain; its full sequence is Calcium-dependent protein kinase 21 (565 aa).

G2 carries N-myristoyl glycine lipidation. Residues 28-55 (PVPDAEAASPRKDGVDGDGDDVRGGGGG) are disordered. Residues 36-50 (SPRKDGVDGDGDDVR) show a composition bias toward basic and acidic residues. The Protein kinase domain occupies 77 to 358 (YVLGKELGRG…AKQVLEHPWL (282 aa)). ATP-binding positions include 83–91 (LGRGEFGVT) and K106. D224 serves as the catalytic Proton acceptor. Residues 364 to 394 (APNVSLGDAVRARLQQFSAMNKFKKKALGVV) are autoinhibitory domain. EF-hand domains follow at residues 401–436 (EEVD…NGQP), 437–472 (VPEP…LKKM), 473–500 (SNDE…ELRE), and 504–539 (PNEQ…GADW). Ca(2+) contacts are provided by D414, D416, N418, H420, E425, D450, D452, N454, T456, E461, D486, D488, S490, E497, D517, D519, D521, R523, and E528.

This sequence belongs to the protein kinase superfamily. Ser/Thr protein kinase family. CDPK subfamily. Expressed in spikelets and developing seeds.

The protein resides in the membrane. It carries out the reaction L-seryl-[protein] + ATP = O-phospho-L-seryl-[protein] + ADP + H(+). The enzyme catalyses L-threonyl-[protein] + ATP = O-phospho-L-threonyl-[protein] + ADP + H(+). Its activity is regulated as follows. Activated by calcium. Autophosphorylation may play an important role in the regulation of the kinase activity. In terms of biological role, may play a role in signal transduction pathways that involve calcium as a second messenger. Functions in signal transduction pathways that positively regulate responses to abscisic acid (ABA) and salt stress. The chain is Calcium-dependent protein kinase 21 from Oryza sativa subsp. japonica (Rice).